The primary structure comprises 552 residues: MGFDVLLDQVGGMGRFQICLIAFFCITNILLFPNIVLENFTAFTPSHRCWVPLLDNDTVSDNDTGTLSKDDLLRISIPLDSNLRPQKCQRFIHPQWQLLHLNGTFPNTNEPDTEPCVDGWVYDRSSFLSTIVTEWDLVCESQSLKSMVQSLFMAGSLLGGLIYGHLSDRVGRKIICKLCFLQLAISNTCAAFAPTFLVYCILRFLAGFSTMTILGNTFILSLEWTLPRSRSMTIMVLLCSYSVGQMLLGGLAFAIQDWHILQLTVSTPIIVLFLSSWKMVESARWLIINNQLDEGLKELRRVAHINGKKNTEETLTTELVRSTMKKELDAVRIKTSIFSLFRAPKLRMRVFGLCFVRFAITVPFYGLILNLQHLGSNVSLFQILCGAVTFTARCVSLLTLNHMGRRISQILFTFPVGLFILVNTFLPQEMQILRVVLATLGIGSVSAASNSASVHHNELVPTILRSTVAGINAVSGRTGAALAPLLMTLMAYSPHLPWISYGVFPILAVPVILLLPETRDLPLPNTIQDVENDRKDSRNIKQEDTCMKVTQF.

12 helical membrane passes run 16–36 (FQIC…PNIV), 146–166 (SMVQ…YGHL), 178–200 (LCFL…LVYC), 204–226 (FLAG…EWTL), 234–254 (IMVL…LAFA), 260–280 (ILQL…WKMV), 350–370 (VFGL…LILN), 380–400 (LFQI…LLTL), 407–427 (ISQI…TFLP), 435–455 (VVLA…ASVH), 474–492 (VSGR…LMAY), and 496–516 (LPWI…LLLP).

This sequence belongs to the major facilitator (TC 2.A.1) superfamily. Organic cation transporter (TC 2.A.1.19) family. Localized to the kidney. Highly specific expression pattern in the nephron, localized to segment 3 of the proximal tubule.

The protein localises to the cell membrane. It carries out the reaction estrone 3-sulfate(out) + glutarate(in) = estrone 3-sulfate(in) + glutarate(out). It catalyses the reaction 17beta-estradiol 17-O-(beta-D-glucuronate)(out) + glutarate(in) = 17beta-estradiol 17-O-(beta-D-glucuronate)(in) + glutarate(out). The enzyme catalyses taurocholate(out) + glutarate(in) = taurocholate(in) + glutarate(out). The catalysed reaction is 5alpha-androstane-3alpha,17beta-diol 3-O-(beta-D-glucuronate)(out) + glutarate(in) = 5alpha-androstane-3alpha,17beta-diol 3-O-(beta-D-glucuronate)(in) + glutarate(out). It carries out the reaction glycocholate(out) + glutarate(in) = glycocholate(in) + glutarate(out). It catalyses the reaction dehydroepiandrosterone 3-sulfate(out) + glutarate(in) = dehydroepiandrosterone 3-sulfate(in) + glutarate(out). The enzyme catalyses glutarate(in) + succinate(out) = glutarate(out) + succinate(in). With respect to regulation, transport is chloride sensitive and transtimulated by glutaric acid. Transport is inhibited by anionic compounds from different chemical classes. Functionally, renal transmembrane organic anion/dicarboxylate exchanger that participates in the reabsorption of conjugated steroids including estradiol-17beta-D-glucuronide (or 17beta-estradiol 17-O-(beta-D-glucuronate)), androstanediol glucuronide (or 5alpha-androstane-3alpha,17beta-diol 3-O-(beta-D-glucuronate)), and estrone 3-sulfate, as well as bile acids taurocholate and glycocholate, driven by an outward gradient of dicarboxylates such as glutarate or succinate. Its function is as follows. Similar uptake function as Isoform 1. Lack of transporter activity. In Homo sapiens (Human), this protein is Steroid transmembrane transporter SLC22A24.